Here is a 309-residue protein sequence, read N- to C-terminus: MDAFQSILKFFLNQKTAIGYSFMALLTVGSERLFSLVAFKCPCSIENTAYGLVFLFAPAWVLLILGFFLNNKAWRLFTGCCMNPQKIFPRRRCCRFFYVLGHITLSSLVAPVMWLSVALLNGTFYECAMSGTRSTRLLEMICKGKPKECWEELHKVSCGKSSMAAMDSEEVRLSLQAQSQILGWCLICSASFFSLLTTCYARCRSKVSYLQLSFWKTYAQREKEQLENKLLEYANKLSERNLKCFFENKKPDPFPMPSFAAWEAASELHSFHQDREHYSTLHKVVDDGLEQTPQEEETTMILVGTAQSL.

Over 1 to 15 (MDAFQSILKFFLNQK) the chain is Cytoplasmic. Residues 16 to 37 (TAIGYSFMALLTVGSERLFSLV) traverse the membrane as a helical segment. A 1,2-diacyl-sn-glycero-3-phosphate is bound by residues Arg-32 and Val-37. Topologically, residues 38–45 (AFKCPCSI) are extracellular. Disulfide bonds link Cys-41–Cys-127, Cys-43–Cys-158, and Cys-142–Cys-149. A helical transmembrane segment spans residues 46–70 (ENTAYGLVFLFAPAWVLLILGFFLN). Residues 71–99 (NKAWRLFTGCCMNPQKIFPRRRCCRFFYV) lie on the Cytoplasmic side of the membrane. The helical transmembrane segment at 100 to 129 (LGHITLSSLVAPVMWLSVALLNGTFYECAM) threads the bilayer. Residue Asn-121 participates in a 1,2-diacyl-sn-glycero-3-phosphate binding. Topologically, residues 130–174 (SGTRSTRLLEMICKGKPKECWEELHKVSCGKSSMAAMDSEEVRLS) are extracellular. The chain crosses the membrane as a helical span at residues 175–200 (LQAQSQILGWCLICSASFFSLLTTCY). Over 201 to 309 (ARCRSKVSYL…MILVGTAQSL (109 aa)) the chain is Cytoplasmic. An a 1,2-diacyl-sn-glycero-3-phosphate-binding site is contributed by Arg-202.

It belongs to the CALHM family. Oligomerizes to form undecameric cone-shaped channels.

The protein resides in the membrane. May assemble to form large pore channels with gating and ion conductance likely regulated by membrane lipids. The sequence is that of Calcium homeostasis modulator protein 5 from Rattus norvegicus (Rat).